The sequence spans 246 residues: Phosducin (246 aa).

Over residues Met1–Glu14 the composition is skewed to acidic residues. The interval Met1–Arg70 is disordered. Residues Met1 to Asp244 form the Phosducin domain. Residues Asn60–Ser69 show a composition bias toward basic and acidic residues. At Ser73 the chain carries Phosphoserine; by PKA. The segment at Tyr111 to Glu246 is thioredoxin fold.

It belongs to the phosducin family. Forms a complex with the beta and gamma subunits of the GTP-binding protein, transducin. Interacts with CRX. In terms of processing, light-induced changes in cyclic nucleotide levels modulate the phosphorylation of this protein by cAMP kinase.

The protein localises to the cytoplasm. The protein resides in the cytosol. It is found in the nucleus. It localises to the cell projection. Its subcellular location is the cilium. The protein localises to the photoreceptor outer segment. The protein resides in the photoreceptor inner segment. Functionally, may participate in the regulation of visual phototransduction or in the integration of photoreceptor metabolism. Inhibits the transcriptional activation activity of the cone-rod homeobox CRX. The polypeptide is Phosducin (PDC) (Homo sapiens (Human)).